We begin with the raw amino-acid sequence, 313 residues long: Protein-methionine-sulfoxide reductase catalytic subunit MsrP (313 aa).

A signal peptide (tat-type signal) is located at residues 1–44; sequence MARWRPDMAEREATPEALYLRRRDFLALGAAGAVGLLLPRGARA. Residues Asn-76, 79-80, Cys-134, Thr-169, Asn-217, Arg-222, and 233-235 contribute to the Mo-molybdopterin site; these read YE and GAK.

This sequence belongs to the MsrP family. Heterodimer of a catalytic subunit (MsrP) and a heme-binding subunit (MsrQ). It depends on Mo-molybdopterin as a cofactor. Predicted to be exported by the Tat system. The position of the signal peptide cleavage has not been experimentally proven.

Its subcellular location is the periplasm. The enzyme catalyses L-methionyl-[protein] + a quinone + H2O = L-methionyl-(S)-S-oxide-[protein] + a quinol. It carries out the reaction L-methionyl-[protein] + a quinone + H2O = L-methionyl-(R)-S-oxide-[protein] + a quinol. In terms of biological role, part of the MsrPQ system that repairs oxidized periplasmic proteins containing methionine sulfoxide residues (Met-O), using respiratory chain electrons. Thus protects these proteins from oxidative-stress damage caused by reactive species of oxygen and chlorine generated by the host defense mechanisms. MsrPQ is essential for the maintenance of envelope integrity under bleach stress, rescuing a wide series of structurally unrelated periplasmic proteins from methionine oxidation. The catalytic subunit MsrP is non-stereospecific, being able to reduce both (R-) and (S-) diastereoisomers of methionine sulfoxide. In Anaeromyxobacter dehalogenans (strain 2CP-1 / ATCC BAA-258), this protein is Protein-methionine-sulfoxide reductase catalytic subunit MsrP.